Here is a 381-residue protein sequence, read N- to C-terminus: 1-deoxy-D-xylulose 5-phosphate reductoisomerase (381 aa).

Positions 10, 11, 12, 13, 36, 37, 38, and 122 each coordinate NADPH. Lys-123 serves as a coordination point for 1-deoxy-D-xylulose 5-phosphate. Glu-124 lines the NADPH pocket. A Mn(2+)-binding site is contributed by Asp-148. The 1-deoxy-D-xylulose 5-phosphate site is built by Ser-149, Glu-150, Ser-173, and His-196. Glu-150 contributes to the Mn(2+) binding site. Gly-202 contacts NADPH. Ser-209, Asn-214, Lys-215, and Glu-218 together coordinate 1-deoxy-D-xylulose 5-phosphate. Glu-218 contacts Mn(2+).

This sequence belongs to the DXR family. Requires Mg(2+) as cofactor. The cofactor is Mn(2+).

The catalysed reaction is 2-C-methyl-D-erythritol 4-phosphate + NADP(+) = 1-deoxy-D-xylulose 5-phosphate + NADPH + H(+). The protein operates within isoprenoid biosynthesis; isopentenyl diphosphate biosynthesis via DXP pathway; isopentenyl diphosphate from 1-deoxy-D-xylulose 5-phosphate: step 1/6. Its function is as follows. Catalyzes the NADPH-dependent rearrangement and reduction of 1-deoxy-D-xylulose-5-phosphate (DXP) to 2-C-methyl-D-erythritol 4-phosphate (MEP). This Desulfitobacterium hafniense (strain Y51) protein is 1-deoxy-D-xylulose 5-phosphate reductoisomerase.